The following is a 38-amino-acid chain: Putative ORF10 protein (38 aa).

In terms of assembly, binds host ZYG11B. This would not play any role in SARS-CoV-2 infection.

This Severe acute respiratory syndrome coronavirus 2 (2019-nCoV) protein is Putative ORF10 protein.